Here is a 589-residue protein sequence, read N- to C-terminus: Proline--tRNA ligase (589 aa).

It belongs to the class-II aminoacyl-tRNA synthetase family. ProS type 1 subfamily. In terms of assembly, homodimer.

The protein resides in the cytoplasm. The enzyme catalyses tRNA(Pro) + L-proline + ATP = L-prolyl-tRNA(Pro) + AMP + diphosphate. Catalyzes the attachment of proline to tRNA(Pro) in a two-step reaction: proline is first activated by ATP to form Pro-AMP and then transferred to the acceptor end of tRNA(Pro). As ProRS can inadvertently accommodate and process non-cognate amino acids such as alanine and cysteine, to avoid such errors it has two additional distinct editing activities against alanine. One activity is designated as 'pretransfer' editing and involves the tRNA(Pro)-independent hydrolysis of activated Ala-AMP. The other activity is designated 'posttransfer' editing and involves deacylation of mischarged Ala-tRNA(Pro). The misacylated Cys-tRNA(Pro) is not edited by ProRS. This chain is Proline--tRNA ligase, found in Gloeobacter violaceus (strain ATCC 29082 / PCC 7421).